The primary structure comprises 217 residues: Adenylate kinase (217 aa).

10-15 contributes to the ATP binding site; it reads GAGKGT. An NMP region spans residues 30 to 59; sequence STGDMFRAAMKEETDLGLEAKSYIDKGELV. Residues Thr31, Arg36, 57–59, 85–88, and Gln92 contribute to the AMP site; these read ELV and GFPR. Residues 126-163 are LID; that stretch reads GRRICKNCGATYHLVFNPPAKENVCDKCGGELYQREDD. Arg127 lines the ATP pocket. Zn(2+)-binding residues include Cys130 and Cys133. Residue 136 to 137 coordinates ATP; that stretch reads TY. Residues Cys150 and Cys153 each coordinate Zn(2+). Arg160 and Arg171 together coordinate AMP. Residue Lys199 coordinates ATP.

The protein belongs to the adenylate kinase family. As to quaternary structure, monomer.

It localises to the cytoplasm. The catalysed reaction is AMP + ATP = 2 ADP. It functions in the pathway purine metabolism; AMP biosynthesis via salvage pathway; AMP from ADP: step 1/1. Functionally, catalyzes the reversible transfer of the terminal phosphate group between ATP and AMP. Plays an important role in cellular energy homeostasis and in adenine nucleotide metabolism. The protein is Adenylate kinase of Bacillus licheniformis (strain ATCC 14580 / DSM 13 / JCM 2505 / CCUG 7422 / NBRC 12200 / NCIMB 9375 / NCTC 10341 / NRRL NRS-1264 / Gibson 46).